The following is a 135-amino-acid chain: Evasin P1134 (135 aa).

An N-terminal signal peptide occupies residues 1–31; it reads MEVKTFAFLQIAVFIALGIQIFAAVTAAADA. 3 disulfides stabilise this stretch: Cys41–Cys63, Cys45–Cys65, and Cys56–Cys76. Asn44 is a glycosylation site (N-linked (GlcNAc...) asparagine). The tract at residues 88–112 is disordered; that stretch reads ETPSNSDLEAATPRPRKTLYPVRNP.

It is found in the secreted. Functionally, salivary chemokine-binding protein which binds to host chemokine CXCL1. This Ixodes ricinus (Common tick) protein is Evasin P1134.